A 696-amino-acid polypeptide reads, in one-letter code: Golgi integral membrane protein 4 (696 aa).

G2 carries the N-myristoyl glycine lipid modification. Residues 2-12 (GNGMCSRKQKR) are Cytoplasmic-facing. The helical; Signal-anchor for type II membrane protein transmembrane segment at 13–33 (IFQTLLLLTVVFGFLYGAMLY) threads the bilayer. Residues 34–696 (YELQTQLRKA…AEKSHRRAEM (663 aa)) are Lumenal-facing. Positions 35-244 (ELQTQLRKAE…KQLKDTLNRI (210 aa)) form a coiled coil. The tract at residues 38 to 107 (TQLRKAEAVA…ETLNKGRQDS (70 aa)) is golgi targeting. An endosome targeting region spans residues 80 to 175 (LEHKKAKEDF…QELSKLKETV (96 aa)). 3 disordered regions span residues 122–145 (KSQHEELKKQHSDLEEEHRKQGED), 244–391 (IPSL…HARA), and 427–696 (LREH…RAEM). Residues 123–145 (SQHEELKKQHSDLEEEHRKQGED) are compositionally biased toward basic and acidic residues. Positions 176 to 248 (YNLREENRQL…DTLNRIPSLR (73 aa)) are golgi targeting. A compositionally biased stretch (polar residues) spans 254-269 (EQQNVTQVAHSPQGYN). A glycan (N-linked (GlcNAc...) asparagine) is linked at N257. Composition is skewed to basic and acidic residues over residues 271-281 (AREKPTREVQE), 298-313 (RAEDTKLYAPTHKEAE), 324-343 (EVERREPEEHQVEEEHRKAL), 355-364 (EHLEEEHDPS), and 370-380 (REWKEQHEQRE). S364 is subject to Phosphoserine. Residues 436-453 (QQRLQGHLLRQQEQQQQQ) show a composition bias toward low complexity. 2 stretches are compositionally biased toward basic and acidic residues: residues 464–476 (AELEEGRPQHQEQ) and 505–545 (AYER…RAAV). S538 carries the phosphoserine modification. Residues 604–626 (QQEDNVDEQYQEEAEEEVQEDLT) show a composition bias toward acidic residues. Phosphotyrosine is present on Y613. T626 is subject to Phosphothreonine. Basic and acidic residues-rich tracts occupy residues 627-638 (EEKKRELEHNAE) and 661-672 (RDDNRPKGREEH). Y673 is modified (phosphotyrosine). A compositionally biased stretch (acidic residues) spans 673-683 (YEEEEEEEEDG).

The protein belongs to the GOLIM4 family. Phosphorylated probably by c-AMP-dependent kinases in its lumenal part. In terms of processing, O-glycosylated; modified by sialic acid residues. Post-translationally, N-glycosylated; N-glycans are probably of the complex type and modified by sialic acid residues.

It is found in the golgi apparatus. Its subcellular location is the golgi stack membrane. The protein localises to the endosome membrane. It localises to the membrane. Plays a role in endosome to Golgi protein trafficking; mediates protein transport along the late endosome-bypass pathway from the early endosome to the Golgi. The polypeptide is Golgi integral membrane protein 4 (GOLIM4) (Homo sapiens (Human)).